Consider the following 172-residue polypeptide: 3-hydroxydecanoyl-[acyl-carrier-protein] dehydratase (172 aa).

His-71 is a catalytic residue.

The protein belongs to the thioester dehydratase family. FabA subfamily. As to quaternary structure, homodimer.

The protein resides in the cytoplasm. It catalyses the reaction a (3R)-hydroxyacyl-[ACP] = a (2E)-enoyl-[ACP] + H2O. The enzyme catalyses (3R)-hydroxydecanoyl-[ACP] = (2E)-decenoyl-[ACP] + H2O. It carries out the reaction (2E)-decenoyl-[ACP] = (3Z)-decenoyl-[ACP]. It functions in the pathway lipid metabolism; fatty acid biosynthesis. In terms of biological role, necessary for the introduction of cis unsaturation into fatty acids. Catalyzes the dehydration of (3R)-3-hydroxydecanoyl-ACP to E-(2)-decenoyl-ACP and then its isomerization to Z-(3)-decenoyl-ACP. Can catalyze the dehydratase reaction for beta-hydroxyacyl-ACPs with saturated chain lengths up to 16:0, being most active on intermediate chain length. The protein is 3-hydroxydecanoyl-[acyl-carrier-protein] dehydratase of Escherichia coli O127:H6 (strain E2348/69 / EPEC).